A 63-amino-acid polypeptide reads, in one-letter code: Large ribosomal subunit protein uL30 (63 aa).

It belongs to the universal ribosomal protein uL30 family. In terms of assembly, part of the 50S ribosomal subunit.

This is Large ribosomal subunit protein uL30 from Bradyrhizobium sp. (strain BTAi1 / ATCC BAA-1182).